We begin with the raw amino-acid sequence, 81 residues long: Cytotoxin 2 (81 aa).

The N-terminal stretch at 1 to 21 is a signal peptide; the sequence is MKTLLLTLVVVTIVCLDLGYT. Cystine bridges form between C24–C42, C35–C59, C63–C74, and C75–C80.

This sequence belongs to the three-finger toxin family. Short-chain subfamily. Type IA cytotoxin sub-subfamily. As to quaternary structure, monomer in solution; Homodimer and oligomer in the presence of negatively charged lipids forming a pore with a size ranging between 20 and 30 Angstroms. In terms of tissue distribution, expressed by the venom gland.

The protein localises to the secreted. It localises to the target cell membrane. Shows cytolytic activity on many different cells by forming pore in lipid membranes. In vivo, increases heart rate or kills the animal by cardiac arrest. In addition, it binds to heparin with high affinity, interacts with Kv channel-interacting protein 1 (KCNIP1) in a calcium-independent manner, and binds to integrin alpha-V/beta-3 (ITGAV/ITGB3) with moderate affinity. The chain is Cytotoxin 2 from Naja kaouthia (Monocled cobra).